Reading from the N-terminus, the 552-residue chain is Hydroxylamine reductase (552 aa).

[2Fe-2S] cluster contacts are provided by cysteine 5, cysteine 8, cysteine 20, and cysteine 27. The hybrid [4Fe-2O-2S] cluster site is built by histidine 251, glutamate 275, cysteine 319, cysteine 407, cysteine 435, cysteine 460, glutamate 494, and lysine 496. The residue at position 407 (cysteine 407) is a Cysteine persulfide.

This sequence belongs to the HCP family. [2Fe-2S] cluster serves as cofactor. The cofactor is hybrid [4Fe-2O-2S] cluster.

It is found in the cytoplasm. The enzyme catalyses A + NH4(+) + H2O = hydroxylamine + AH2 + H(+). Catalyzes the reduction of hydroxylamine to form NH(3) and H(2)O. This is Hydroxylamine reductase from Shigella boydii serotype 4 (strain Sb227).